We begin with the raw amino-acid sequence, 321 residues long: Cytochrome c biogenesis protein CcsA (321 aa).

The next 7 membrane-spanning stretches (helical) occupy residues 9–29 (ILTH…LITL), 44–64 (GMIA…VSSG), 68–88 (LSNL…LHTI), 143–163 (MLLS…LLII), 225–245 (VISL…VWAN), 259–273 (TWAF…IYLH), and 288–308 (VASI…LLGI).

The protein belongs to the CcmF/CycK/Ccl1/NrfE/CcsA family. In terms of assembly, may interact with Ccs1.

The protein resides in the plastid. Its subcellular location is the chloroplast thylakoid membrane. Required during biogenesis of c-type cytochromes (cytochrome c6 and cytochrome f) at the step of heme attachment. The chain is Cytochrome c biogenesis protein CcsA from Saccharum hybrid (Sugarcane).